We begin with the raw amino-acid sequence, 251 residues long: Protein DEEPER ROOTING 1 (251 aa).

Positions 46–52 (SLLAIGT) match the IGT motif motif. Residues 64–105 (VENSSDNVQSVQDTVKFTEEEVDKIRKEFETLLAIKDQAEAQ) adopt a coiled-coil conformation.

Belongs to the LAZY family.

Functionally, involved in the control of root growth angle. Involved in cell elongation in the root tip that causes asymmetric root growth and downward bending of the root in response to gravity. The chain is Protein DEEPER ROOTING 1 from Oryza sativa subsp. japonica (Rice).